Consider the following 103-residue polypeptide: UPF0145 protein RSKD131_1772 (103 aa).

This sequence belongs to the UPF0145 family.

This is UPF0145 protein RSKD131_1772 from Cereibacter sphaeroides (strain KD131 / KCTC 12085) (Rhodobacter sphaeroides).